The following is a 219-amino-acid chain: Abasic site processing protein YobE (219 aa).

The active-site Nucleophile is the Cys2. Cys2 carries the thiazolidine linkage to a ring-opened DNA abasic site modification. Glu106 is an active-site residue.

This sequence belongs to the SOS response-associated peptidase family.

Formation and reversal of DNA-protein cross-link depends on DNA context. Catalyzes formation of the thiazolidine linkage in presence of abasic sites in single-stranded DNA. Mediates the reversal of the thiazolidine cross-link in presence of double stranded DNA. Functionally, sensor of abasic sites in single-stranded DNA (ssDNA) required to preserve genome integrity by promoting error-free repair of abasic sites. Recognizes and binds abasic sites in ssDNA at replication forks and chemically modifies the lesion by forming a covalent cross-link with DNA: forms a stable thiazolidine linkage between a ring-opened abasic site and the alpha-amino and sulfhydryl substituents of its N-terminal catalytic cysteine residue. The DNA-protein cross-link is then reversed: able to catalyze the reversal of the thiazolidine cross-link and cycle between a cross-link and a non-cross-linked state depending on DNA context: mediates self-reversal of the thiazolidine cross-link in double stranded DNA. May act as a protease: mediates autocatalytic processing of its N-terminal methionine in order to expose the catalytic cysteine. The chain is Abasic site processing protein YobE (yobE) from Bacillus subtilis (strain 168).